A 188-amino-acid chain; its full sequence is Protein GrpE (188 aa).

The segment covering 1–16 has biased composition (basic and acidic residues); it reads MEERNEQVVEEVKEAQ. The disordered stretch occupies residues 1-31; sequence MEERNEQVVEEVKEAQVEEAVTPENSEETVE.

The protein belongs to the GrpE family. In terms of assembly, homodimer.

It is found in the cytoplasm. Its function is as follows. Participates actively in the response to hyperosmotic and heat shock by preventing the aggregation of stress-denatured proteins, in association with DnaK and GrpE. It is the nucleotide exchange factor for DnaK and may function as a thermosensor. Unfolded proteins bind initially to DnaJ; upon interaction with the DnaJ-bound protein, DnaK hydrolyzes its bound ATP, resulting in the formation of a stable complex. GrpE releases ADP from DnaK; ATP binding to DnaK triggers the release of the substrate protein, thus completing the reaction cycle. Several rounds of ATP-dependent interactions between DnaJ, DnaK and GrpE are required for fully efficient folding. The chain is Protein GrpE from Bacillus anthracis.